The chain runs to 560 residues: Putative transport protein VS_1837 (560 aa).

5 helical membrane passes run 5-25, 37-57, 66-86, 91-111, and 155-175; these read VVLLLKQNPILLIFVVLSIGL, LGNSIGVLITSLIMGHLGFSF, FMLFIYCVGIEAGPNFFGIFF, HYLILSLVVLSTAIALTYFCS, and LGLVIENLSVGYAMAYLVGLI. RCK C-terminal domains follow at residues 203-292 and 293-376; these read RGLG…FRNG and KEVF…KIGF. Transmembrane regions (helical) follow at residues 386–406, 409–429, 450–470, 478–498, 506–526, and 539–559; these read LTAFCSFFILGILFGLITMTF, VSFGLGNAVGLLLSGIMLGFL, LGLMFFMVGIGLSAGGKIFEH, VIGIALIVSVLPVFFAYLVGA, ALLFGAIIGARTCAPAMDIVN, and AGTYAIANILMTLAGTFIIII.

It belongs to the AAE transporter (TC 2.A.81) family. YbjL subfamily.

It is found in the cell membrane. This Vibrio atlanticus (strain LGP32) (Vibrio splendidus (strain Mel32)) protein is Putative transport protein VS_1837.